The sequence spans 688 residues: Probable xyloglucan glycosyltransferase 7 (688 aa).

The disordered stretch occupies residues Met-1 to Lys-25. Over residues Arg-8 to Thr-20 the composition is skewed to gly residues. Helical transmembrane passes span Val-121–Trp-141 and Val-183–Ile-203. Asp-269 is a catalytic residue. The substrate site is built by Asp-328 and Asp-330. Residue Asp-422 is part of the active site. Helical transmembrane passes span Leu-500 to Val-520 and Leu-525 to Ala-545. The interval His-604–His-635 is disordered. The span at Leu-619 to Lys-628 shows a compositional bias: basic and acidic residues. 2 consecutive transmembrane segments (helical) span residues Ile-638–Leu-657 and Ile-663–Ile-683.

It belongs to the glycosyltransferase 2 family. Plant cellulose synthase-like C subfamily.

It localises to the golgi apparatus membrane. Probable beta-1,4-glucan synthase rather involved in the synthesis of the xyloglucan backbone than cellulose. Seems to work simultaneously with xyloglucan 6-xylosyltransferase. Xyloglucan is a noncellulosic polysaccharides of plant cell wall and consists of a glucan backbone substituted by xylose, galactose and fucose. This Oryza sativa subsp. japonica (Rice) protein is Probable xyloglucan glycosyltransferase 7 (CSLC7).